We begin with the raw amino-acid sequence, 493 residues long: Xylulose kinase (493 aa).

Position 84 to 85 (84 to 85) interacts with substrate; that stretch reads QH. D247 functions as the Proton acceptor in the catalytic mechanism.

This sequence belongs to the FGGY kinase family.

The catalysed reaction is D-xylulose + ATP = D-xylulose 5-phosphate + ADP + H(+). Functionally, catalyzes the phosphorylation of D-xylulose to D-xylulose 5-phosphate. This chain is Xylulose kinase, found in Haemophilus influenzae (strain ATCC 51907 / DSM 11121 / KW20 / Rd).